Here is a 359-residue protein sequence, read N- to C-terminus: Probable L-ascorbate peroxidase 7, chloroplastic (359 aa).

A chloroplast-targeting transit peptide spans 1-71 (MAAQRLAALH…KAAGSGRSVM (71 aa)). The Proton acceptor role is filled by His-118. A heme b-binding site is contributed by His-247. Thr-248 provides a ligand contact to K(+). A disordered region spans residues 251–277 (RSRPERSGWGKPETKYTKNGPGAPGGQ). Residues 252-266 (SRPERSGWGKPETKY) are compositionally biased toward basic and acidic residues. Positions 280 and 287 each coordinate K(+).

It belongs to the peroxidase family. Ascorbate peroxidase subfamily. The cofactor is heme b. Expressed in roots, leaves, stems and flowers.

The protein resides in the plastid. It is found in the chloroplast stroma. It carries out the reaction L-ascorbate + H2O2 = L-dehydroascorbate + 2 H2O. Its function is as follows. Plays a key role in hydrogen peroxide removal. In Oryza sativa subsp. japonica (Rice), this protein is Probable L-ascorbate peroxidase 7, chloroplastic.